The following is a 280-amino-acid chain: Shikimate dehydrogenase (NADP(+)) (280 aa).

Shikimate is bound by residues Ser15–Ser17 and Thr62. The active-site Proton acceptor is Lys66. Glu78 provides a ligand contact to NADP(+). Positions 87 and 102 each coordinate shikimate. Residues Gly127–Ala131, Asn151–Lys156, and Ile219 each bind NADP(+). Tyr221 is a binding site for shikimate. Gly242 contacts NADP(+).

This sequence belongs to the shikimate dehydrogenase family. Homodimer.

It carries out the reaction shikimate + NADP(+) = 3-dehydroshikimate + NADPH + H(+). Its pathway is metabolic intermediate biosynthesis; chorismate biosynthesis; chorismate from D-erythrose 4-phosphate and phosphoenolpyruvate: step 4/7. Involved in the biosynthesis of the chorismate, which leads to the biosynthesis of aromatic amino acids. Catalyzes the reversible NADPH linked reduction of 3-dehydroshikimate (DHSA) to yield shikimate (SA). The protein is Shikimate dehydrogenase (NADP(+)) of Bacillus subtilis (strain 168).